We begin with the raw amino-acid sequence, 532 residues long: 3-hydroxy-3-methylglutaryl-coenzyme A reductase 1 (532 aa).

A helical membrane pass occupies residues 63-83 (FATVVYLVSLFAHPDAPATTT). Residues 77–117 (DAPATTTGDDDDGQGGSRRARPAAAEPAPMHGHGGGMMEAD) are linker. Residues 78 to 111 (APATTTGDDDDGQGGSRRARPAAAEPAPMHGHGG) are disordered. Over residues 98–107 (PAAAEPAPMH) the composition is skewed to low complexity. Positions 118–532 (DEEIVAAVAS…SSKDVAKAAS (415 aa)) are catalytic. Glutamate 211 serves as the catalytic Charge relay system. Asparagine 275 carries an N-linked (GlcNAc...) asparagine glycan. Catalysis depends on charge relay system residues lysine 343 and aspartate 419. Histidine 517 serves as the catalytic Proton donor. Residue asparagine 521 is glycosylated (N-linked (GlcNAc...) asparagine).

It belongs to the HMG-CoA reductase family.

The protein localises to the endoplasmic reticulum membrane. It carries out the reaction (R)-mevalonate + 2 NADP(+) + CoA = (3S)-3-hydroxy-3-methylglutaryl-CoA + 2 NADPH + 2 H(+). Its pathway is metabolic intermediate biosynthesis; (R)-mevalonate biosynthesis; (R)-mevalonate from acetyl-CoA: step 3/3. Catalyzes the synthesis of mevalonate. The specific precursor of all isoprenoid compounds present in plants. In Oryza sativa subsp. japonica (Rice), this protein is 3-hydroxy-3-methylglutaryl-coenzyme A reductase 1 (HMG1).